The following is a 322-amino-acid chain: tRNA U34 carboxymethyltransferase (322 aa).

Carboxy-S-adenosyl-L-methionine contacts are provided by residues K91, W105, K110, G129, 179–180 (LE), M195, Y199, and R314.

It belongs to the class I-like SAM-binding methyltransferase superfamily. CmoB family. Homotetramer.

The enzyme catalyses carboxy-S-adenosyl-L-methionine + 5-hydroxyuridine(34) in tRNA = 5-carboxymethoxyuridine(34) in tRNA + S-adenosyl-L-homocysteine + H(+). In terms of biological role, catalyzes carboxymethyl transfer from carboxy-S-adenosyl-L-methionine (Cx-SAM) to 5-hydroxyuridine (ho5U) to form 5-carboxymethoxyuridine (cmo5U) at position 34 in tRNAs. The protein is tRNA U34 carboxymethyltransferase of Pseudomonas paraeruginosa (strain DSM 24068 / PA7) (Pseudomonas aeruginosa (strain PA7)).